The sequence spans 246 residues: Protein lin-37 homolog (246 aa).

M1 bears the N-acetylmethionine mark. Glycyl lysine isopeptide (Lys-Gly) (interchain with G-Cter in SUMO2) cross-links involve residues K5 and K7. The span at 39–55 shows a compositional bias: basic and acidic residues; the sequence is RLDEEAGKTPLDTHNKD. Disordered stretches follow at residues 39 to 90 and 129 to 208; these read RLDE…GGPQ and VRER…TLIY. Phosphoserine occurs at positions 135 and 138. Phosphothreonine is present on T167. Phosphoserine occurs at positions 182 and 202.

As to quaternary structure, component of the DREAM complex (also named LINC complex) at least composed of E2F4, E2F5, LIN9, LIN37, LIN52, LIN54, MYBL1, MYBL2, RBL1, RBL2, RBBP4, TFDP1 and TFDP2. The complex exists in quiescent cells where it represses cell cycle-dependent genes. It dissociates in S phase when LIN9, LIN37, LIN52 and LIN54 form a subcomplex that binds to MYBL2.

In Mus musculus (Mouse), this protein is Protein lin-37 homolog (Lin37).